Reading from the N-terminus, the 320-residue chain is ATP-dependent 6-phosphofructokinase (320 aa).

An ATP-binding site is contributed by Gly-12. Residue 22 to 26 (RGVVR) participates in ADP binding. Residues 73–74 (RF) and 103–106 (GDGS) each bind ATP. Position 104 (Asp-104) interacts with Mg(2+). A substrate-binding site is contributed by 126–128 (TID). The active-site Proton acceptor is the Asp-128. Arg-155 provides a ligand contact to ADP. Substrate contacts are provided by residues Arg-163 and 170-172 (MGR). ADP-binding positions include 186–188 (GCE), Lys-212, and 214–216 (KKH). Residues Glu-223, Arg-244, and 250–253 (HIQR) each bind substrate.

Belongs to the phosphofructokinase type A (PFKA) family. ATP-dependent PFK group I subfamily. Prokaryotic clade 'B1' sub-subfamily. As to quaternary structure, homotetramer. Mg(2+) is required as a cofactor.

The protein localises to the cytoplasm. The catalysed reaction is beta-D-fructose 6-phosphate + ATP = beta-D-fructose 1,6-bisphosphate + ADP + H(+). It participates in carbohydrate degradation; glycolysis; D-glyceraldehyde 3-phosphate and glycerone phosphate from D-glucose: step 3/4. Its activity is regulated as follows. Allosterically activated by ADP and other diphosphonucleosides, and allosterically inhibited by phosphoenolpyruvate. In terms of biological role, catalyzes the phosphorylation of D-fructose 6-phosphate to fructose 1,6-bisphosphate by ATP, the first committing step of glycolysis. The protein is ATP-dependent 6-phosphofructokinase of Vibrio vulnificus (strain CMCP6).